The following is a 585-amino-acid chain: ATP-dependent lipid A-core flippase (585 aa).

Helical transmembrane passes span 25 to 45, 63 to 83, 127 to 146, 150 to 170, 250 to 270, and 277 to 297; these read FLAALACMGVASLAEPVFPAI, WLFYPLAIMGIFLVRAIFGFL, IAYDVTGVAGAATNALTSLI, LSIVGLLVWLLWLNWQLTLIT, QSPLVQFFAASGVAIIMGVAL, and QTTVGSFVSFVTAMLMLMAPL. In terms of domain architecture, ABC transmembrane type-1 spans 26–309; that stretch reads LAALACMGVA…VTDVNAPIQR (284 aa). One can recognise an ABC transporter domain in the interval 341 to 577; that stretch reads VEFDGVTFTY…DGLYARLYRM (237 aa). An ATP-binding site is contributed by 375-382; the sequence is GPSGSGKT.

Belongs to the ABC transporter superfamily. Lipid exporter (TC 3.A.1.106) family. In terms of assembly, homodimer.

Its subcellular location is the cell inner membrane. It carries out the reaction ATP + H2O + lipid A-core oligosaccharideSide 1 = ADP + phosphate + lipid A-core oligosaccharideSide 2.. Functionally, involved in lipopolysaccharide (LPS) biosynthesis. Translocates lipid A-core from the inner to the outer leaflet of the inner membrane. Transmembrane domains (TMD) form a pore in the inner membrane and the ATP-binding domain (NBD) is responsible for energy generation. The sequence is that of ATP-dependent lipid A-core flippase from Dechloromonas aromatica (strain RCB).